A 339-amino-acid polypeptide reads, in one-letter code: Ketol-acid reductoisomerase (NADP(+)) (339 aa).

The KARI N-terminal Rossmann domain occupies Met1–Thr182. Residues Tyr24–Gln27, Arg48, Ser51, Ser53, and Asp83–Gln86 each bind NADP(+). His108 is a catalytic residue. Gly134 contributes to the NADP(+) binding site. A KARI C-terminal knotted domain is found at Thr183–Ile328. Residues Asp191, Glu195, Glu227, and Glu231 each coordinate Mg(2+). Position 252 (Ser252) interacts with substrate.

It belongs to the ketol-acid reductoisomerase family. The cofactor is Mg(2+).

The catalysed reaction is (2R)-2,3-dihydroxy-3-methylbutanoate + NADP(+) = (2S)-2-acetolactate + NADPH + H(+). It catalyses the reaction (2R,3R)-2,3-dihydroxy-3-methylpentanoate + NADP(+) = (S)-2-ethyl-2-hydroxy-3-oxobutanoate + NADPH + H(+). It functions in the pathway amino-acid biosynthesis; L-isoleucine biosynthesis; L-isoleucine from 2-oxobutanoate: step 2/4. The protein operates within amino-acid biosynthesis; L-valine biosynthesis; L-valine from pyruvate: step 2/4. Functionally, involved in the biosynthesis of branched-chain amino acids (BCAA). Catalyzes an alkyl-migration followed by a ketol-acid reduction of (S)-2-acetolactate (S2AL) to yield (R)-2,3-dihydroxy-isovalerate. In the isomerase reaction, S2AL is rearranged via a Mg-dependent methyl migration to produce 3-hydroxy-3-methyl-2-ketobutyrate (HMKB). In the reductase reaction, this 2-ketoacid undergoes a metal-dependent reduction by NADPH to yield (R)-2,3-dihydroxy-isovalerate. The protein is Ketol-acid reductoisomerase (NADP(+)) of Azorhizobium caulinodans (strain ATCC 43989 / DSM 5975 / JCM 20966 / LMG 6465 / NBRC 14845 / NCIMB 13405 / ORS 571).